Consider the following 259-residue polypeptide: Thiazole synthase (259 aa).

Lys99 functions as the Schiff-base intermediate with DXP in the catalytic mechanism. 1-deoxy-D-xylulose 5-phosphate-binding positions include Gly161, 187–188 (AG), and 209–219 (NSAIACAQNPI).

It belongs to the ThiG family. In terms of assembly, homotetramer. Forms heterodimers with either ThiH or ThiS.

The protein localises to the cytoplasm. The enzyme catalyses [ThiS sulfur-carrier protein]-C-terminal-Gly-aminoethanethioate + 2-iminoacetate + 1-deoxy-D-xylulose 5-phosphate = [ThiS sulfur-carrier protein]-C-terminal Gly-Gly + 2-[(2R,5Z)-2-carboxy-4-methylthiazol-5(2H)-ylidene]ethyl phosphate + 2 H2O + H(+). The protein operates within cofactor biosynthesis; thiamine diphosphate biosynthesis. Catalyzes the rearrangement of 1-deoxy-D-xylulose 5-phosphate (DXP) to produce the thiazole phosphate moiety of thiamine. Sulfur is provided by the thiocarboxylate moiety of the carrier protein ThiS. In vitro, sulfur can be provided by H(2)S. This is Thiazole synthase from Aliarcobacter butzleri (strain RM4018) (Arcobacter butzleri).